Reading from the N-terminus, the 940-residue chain is BTB/POZ domain-containing protein FBL11 (940 aa).

The 69-residue stretch at 41-109 folds into the BTB domain; it reads WDMSEILSYG…LYGYDIEITS (69 aa). The BACK domain maps to 155-258; the sequence is IQIWSFGLEH…FSLLPLWFIA (104 aa).

It functions in the pathway protein modification; protein ubiquitination. May act as a substrate-specific adapter of an E3 ubiquitin-protein ligase complex (CUL3-RBX1-BTB) which mediates the ubiquitination and subsequent proteasomal degradation of target proteins. The sequence is that of BTB/POZ domain-containing protein FBL11 (FBL11) from Arabidopsis thaliana (Mouse-ear cress).